Consider the following 299-residue polypeptide: Farnesyl diphosphate synthase (299 aa).

Isopentenyl diphosphate-binding residues include Lys-45, Arg-48, and His-77. Mg(2+) is bound by residues Asp-84 and Asp-90. Residue Arg-95 coordinates (2E)-geranyl diphosphate. Isopentenyl diphosphate is bound at residue Arg-96. Residues Lys-181, Thr-182, Gln-220, and Lys-237 each contribute to the (2E)-geranyl diphosphate site.

It belongs to the FPP/GGPP synthase family. The cofactor is Mg(2+).

The protein resides in the cytoplasm. It carries out the reaction isopentenyl diphosphate + (2E)-geranyl diphosphate = (2E,6E)-farnesyl diphosphate + diphosphate. In Escherichia coli (strain K12), this protein is Farnesyl diphosphate synthase (ispA).